The chain runs to 221 residues: Tetraspanin-2 (221 aa).

Residues 1 to 13 (MGRFRGGLRCIKY) are Cytoplasmic-facing. Residues 14–34 (LLLGFNLLFWLAGSAVIAFGL) form a helical membrane-spanning segment. Residues 35–54 (WFRFGGAIKELSSEDKSPEY) are Extracellular-facing. The chain crosses the membrane as a helical span at residues 55–75 (FYVGLYVLVGAGALMMAVGFF). Over 76–90 (GCCGAMRESQCVLGS) the chain is Cytoplasmic. Residues 91–111 (FFTCLLVIFAAEVTTGVFAFI) form a helical membrane-spanning segment. Topologically, residues 112-188 (GKGVAIRHVQ…ETIISVKLQL (77 aa)) are extracellular. N-linked (GlcNAc...) asparagine glycosylation is present at Asn-139. Residues 189–209 (IGIVGIGIAGLTIFGMIFSMV) traverse the membrane as a helical segment. Residues 210 to 221 (LCCAIRNSRDVI) lie on the Cytoplasmic side of the membrane.

The protein belongs to the tetraspanin (TM4SF) family.

It is found in the membrane. Functionally, may play a role in signalling in oligodendrocytes in the early stages of their terminal differentiation into myelin-forming glia and may also function in stabilizing the mature sheath. This chain is Tetraspanin-2 (TSPAN2), found in Homo sapiens (Human).